Reading from the N-terminus, the 422-residue chain is Glutamate-1-semialdehyde 2,1-aminomutase (422 aa).

Lys-258 is subject to N6-(pyridoxal phosphate)lysine.

Belongs to the class-III pyridoxal-phosphate-dependent aminotransferase family. HemL subfamily. As to quaternary structure, homodimer. It depends on pyridoxal 5'-phosphate as a cofactor.

It is found in the cytoplasm. The enzyme catalyses (S)-4-amino-5-oxopentanoate = 5-aminolevulinate. The protein operates within porphyrin-containing compound metabolism; protoporphyrin-IX biosynthesis; 5-aminolevulinate from L-glutamyl-tRNA(Glu): step 2/2. The protein is Glutamate-1-semialdehyde 2,1-aminomutase of Chlamydia trachomatis serovar L2 (strain ATCC VR-902B / DSM 19102 / 434/Bu).